The sequence spans 182 residues: Large ribosomal subunit protein uL5 (182 aa).

The protein belongs to the universal ribosomal protein uL5 family. In terms of assembly, part of the 50S ribosomal subunit; part of the 5S rRNA/L5/L18/L25 subcomplex. Contacts the 5S rRNA and the P site tRNA. Forms a bridge to the 30S subunit in the 70S ribosome.

This is one of the proteins that bind and probably mediate the attachment of the 5S RNA into the large ribosomal subunit, where it forms part of the central protuberance. In the 70S ribosome it contacts protein S13 of the 30S subunit (bridge B1b), connecting the 2 subunits; this bridge is implicated in subunit movement. Contacts the P site tRNA; the 5S rRNA and some of its associated proteins might help stabilize positioning of ribosome-bound tRNAs. This chain is Large ribosomal subunit protein uL5, found in Thermus thermophilus (strain ATCC BAA-163 / DSM 7039 / HB27).